The chain runs to 239 residues: Lactate utilization protein A (239 aa).

The protein belongs to the LutA/YkgE family.

Functionally, is involved in L-lactate degradation and allows cells to grow with lactate as the sole carbon source. This chain is Lactate utilization protein A, found in Bacillus cytotoxicus (strain DSM 22905 / CIP 110041 / 391-98 / NVH 391-98).